The sequence spans 216 residues: DNA-directed RNA polymerase subunit alpha (216 aa).

It belongs to the RNA polymerase alpha chain family. As to quaternary structure, in plastids the minimal PEP RNA polymerase catalytic core is composed of four subunits: alpha, beta, beta', and beta''. When a (nuclear-encoded) sigma factor is associated with the core the holoenzyme is formed, which can initiate transcription.

It is found in the plastid. The protein localises to the chloroplast. The catalysed reaction is RNA(n) + a ribonucleoside 5'-triphosphate = RNA(n+1) + diphosphate. Functionally, DNA-dependent RNA polymerase catalyzes the transcription of DNA into RNA using the four ribonucleoside triphosphates as substrates. This is DNA-directed RNA polymerase subunit alpha (rpoA) from Euglena gracilis.